The primary structure comprises 474 residues: Dihydrolipoyl dehydrogenase (474 aa).

FAD is bound by residues 36-44, Lys53, and Gly119; that span reads EAKDMGGTC. Cysteines 44 and 49 form a disulfide. NAD(+)-binding positions include 184–188, Glu207, and 275–278; these read GSGYI and ATGR. FAD-binding residues include Asp323 and Ala331. His459 serves as the catalytic Proton acceptor.

The protein belongs to the class-I pyridine nucleotide-disulfide oxidoreductase family. Homodimer. FAD is required as a cofactor.

The protein localises to the cell inner membrane. The enzyme catalyses N(6)-[(R)-dihydrolipoyl]-L-lysyl-[protein] + NAD(+) = N(6)-[(R)-lipoyl]-L-lysyl-[protein] + NADH + H(+). Functionally, lipoamide dehydrogenase is a component of the alpha-ketoacid dehydrogenase complexes. In Synechocystis sp. (strain ATCC 27184 / PCC 6803 / Kazusa), this protein is Dihydrolipoyl dehydrogenase (lpdA).